We begin with the raw amino-acid sequence, 791 residues long: uncharacterized protein (791 aa).

The next 4 membrane-spanning stretches (helical) occupy residues 104–124 (MWIL…FFLM), 131–151 (IAAI…YYII), 177–197 (ACLY…TLII), and 226–246 (WSGL…PSVL). A glycan (N-linked (GlcNAc...) asparagine) is linked at asparagine 265. 8 consecutive transmembrane segments (helical) span residues 274 to 294 (FFIV…IFPA), 309 to 329 (SAVL…PLTL), 346 to 366 (WATC…LPGL), 421 to 441 (FIIN…SFFL), 471 to 491 (VHWG…FAFT), 501 to 521 (SYGF…LSLI), 533 to 553 (AFFE…LLYF), and 583 to 603 (LVAA…SAVT). N-linked (GlcNAc...) asparagine glycosylation is present at asparagine 621. 3 consecutive transmembrane segments (helical) span residues 653–673 (FVMW…LLQI), 697–717 (SVTG…NYLI), and 733–753 (AAAM…CVVY). The N-linked (GlcNAc...) asparagine glycan is linked to asparagine 759.

It belongs to the oligopeptide OPT transporter family.

Its subcellular location is the membrane. This is an uncharacterized protein from Schizosaccharomyces pombe (strain 972 / ATCC 24843) (Fission yeast).